Here is a 196-residue protein sequence, read N- to C-terminus: Probable malonic semialdehyde reductase RutE (196 aa).

This sequence belongs to the nitroreductase family. HadB/RutE subfamily. FMN serves as cofactor.

It carries out the reaction 3-hydroxypropanoate + NADP(+) = 3-oxopropanoate + NADPH + H(+). Its function is as follows. May reduce toxic product malonic semialdehyde to 3-hydroxypropionic acid, which is excreted. This Escherichia coli O139:H28 (strain E24377A / ETEC) protein is Probable malonic semialdehyde reductase RutE.